Consider the following 436-residue polypeptide: 3-ketoacyl-CoA thiolase (436 aa).

Cysteine 99 (acyl-thioester intermediate) is an active-site residue. Catalysis depends on proton acceptor residues histidine 392 and cysteine 422.

The protein belongs to the thiolase-like superfamily. Thiolase family. As to quaternary structure, heterotetramer of two alpha chains (FadJ) and two beta chains (FadI).

The protein resides in the cytoplasm. It carries out the reaction an acyl-CoA + acetyl-CoA = a 3-oxoacyl-CoA + CoA. It functions in the pathway lipid metabolism; fatty acid beta-oxidation. Catalyzes the final step of fatty acid oxidation in which acetyl-CoA is released and the CoA ester of a fatty acid two carbons shorter is formed. The protein is 3-ketoacyl-CoA thiolase of Salmonella heidelberg (strain SL476).